Consider the following 636-residue polypeptide: MGKIIGIDLGTTNSCVAVMEGGQPTVIANQEGNRTTPSVVAFTKSGERLVGQVAKRQAITNPENTVFSIKRFMGRRYDEVNEEMKMVPYKVVRGENGDARVDIMGKKYSPPEISAMILTKLKEAAESYLGEKVTQAVITVPAYFNDAQRQATKDAGKIAGLDVLRIINEPTAAALAYGLDKKKNETIAVYDFGGGTFDISVLEVGEGVVEVKSTNGDTHLGGDNIDQRVIDWIVSEFKKENGIDLSKDQMALQRLKEAAEKAKMELSTLLETEINLPFITADATGPKHLQMRLSRSRFEQMVEDILQRSMGPCKQAMTDASVTPSQIDEVVLVGGQTRMPRIQTLVRELFQRDPHQGVNPDEVVAIGAAVQGGVLGGEVKDVLLLDVTPLSLGIETMGGVFTKLIERNTTIPTRKSEVFSTASDNQPSVEIKVYQGERAMARDNRLLGVFQLGNIPPAPRGVPQIEVTFDIDANGILNVTAKDRGTNNEQKITITSSSGLSKDEVEKMARDAEANAADDRKLKDTIDARNRADAMVYNVEKTLKEHRAKVGEAEAKEIEAALEETKKTLNENDAEKINAAVDRLTTASHKLAEAMYKSSSQPGAQEAPPTDGQPKPDEKGKDNVVDAEFVDVDDKK.

Position 196 is a phosphothreonine; by autocatalysis (threonine 196). The disordered stretch occupies residues leucine 591 to lysine 636. Residues proline 614 to valine 624 are compositionally biased toward basic and acidic residues.

It belongs to the heat shock protein 70 family.

In terms of biological role, acts as a chaperone. The sequence is that of Chaperone protein DnaK from Solibacter usitatus (strain Ellin6076).